We begin with the raw amino-acid sequence, 254 residues long: Imidazole glycerol phosphate synthase subunit HisF (254 aa).

Residues D13 and D132 contribute to the active site.

This sequence belongs to the HisA/HisF family. Heterodimer of HisH and HisF.

It is found in the cytoplasm. It catalyses the reaction 5-[(5-phospho-1-deoxy-D-ribulos-1-ylimino)methylamino]-1-(5-phospho-beta-D-ribosyl)imidazole-4-carboxamide + L-glutamine = D-erythro-1-(imidazol-4-yl)glycerol 3-phosphate + 5-amino-1-(5-phospho-beta-D-ribosyl)imidazole-4-carboxamide + L-glutamate + H(+). It functions in the pathway amino-acid biosynthesis; L-histidine biosynthesis; L-histidine from 5-phospho-alpha-D-ribose 1-diphosphate: step 5/9. In terms of biological role, IGPS catalyzes the conversion of PRFAR and glutamine to IGP, AICAR and glutamate. The HisF subunit catalyzes the cyclization activity that produces IGP and AICAR from PRFAR using the ammonia provided by the HisH subunit. This Nautilia profundicola (strain ATCC BAA-1463 / DSM 18972 / AmH) protein is Imidazole glycerol phosphate synthase subunit HisF.